The primary structure comprises 390 residues: Nucleosome assembly protein 1-like 1 (390 aa).

Over residues methionine 1–serine 10 the composition is skewed to basic and acidic residues. Residues methionine 1–lysine 32 form a disordered region. An N-acetylalanine modification is found at alanine 2. At serine 10 the chain carries Phosphoserine. Residues glutamate 11 to glycine 28 are compositionally biased toward acidic residues. Phosphothreonine is present on residues threonine 62 and threonine 64. Serine 69 carries the phosphoserine modification. Lysine 116 bears the N6-acetyllysine mark. The short motif at tyrosine 125–alanine 150 is the NAP1L motif element. The span at glutamate 131–serine 143 shows a compositional bias: acidic residues. A disordered region spans residues glutamate 131 to aspartate 163. At serine 143 the chain carries Phosphoserine. The segment covering glutamate 144–aspartate 163 has biased composition (basic and acidic residues). The Nuclear localization signal motif lies at isoleucine 272–histidine 278. The segment covering alanine 345–aspartate 375 has biased composition (acidic residues). The interval alanine 345–glutamine 390 is disordered. Glutamate 358 and glutamate 359 each carry 5-glutamyl polyglycine. Positions tyrosine 376 to glutamine 390 are enriched in basic and acidic residues. Cysteine methyl ester is present on cysteine 387. Cysteine 387 carries the S-farnesyl cysteine lipid modification. Residues lysine 388 to glutamine 390 constitute a propeptide, removed in mature form.

It belongs to the nucleosome assembly protein (NAP) family. In terms of assembly, homodimer. The dimer binds strongly and sequentially to single and double H2A-H2B heterodimers. Interacts with ERCC6; this interaction increases ERCC6 processivity. Interacts with RAD54. Interacts with SETD1A. Post-translationally, polyglycylated by TTLL10 on glutamate residues, resulting in polyglycine chains on the gamma-carboxyl group. Both polyglutamylation and polyglycylation modifications can coexist on the same protein on adjacent residues, and lowering polyglycylation levels increases polyglutamylation, and reciprocally. In terms of processing, polyglutamylated by TTLL4 on glutamate residues, resulting in polyglutamate chains on the gamma-carboxyl group. Both polyglutamylation and polyglycylation modifications can coexist on the same protein on adjacent residues, and lowering polyglycylation levels increases polyglutamylation, and reciprocally.

The protein localises to the nucleus. The protein resides in the melanosome. It is found in the cytoplasm. Functionally, histone chaperone that plays a role in the nuclear import of H2A-H2B and nucleosome assembly. Also participates in several important DNA repair mechanisms: greatly enhances ERCC6-mediated chromatin remodeling which is essential for transcription-coupled nucleotide excision DNA repair. Also stimulates homologous recombination (HR) by RAD51 and RAD54 which is essential in mitotic DNA double strand break (DSB) repair. Plays a key role in the regulation of embryonic neurogenesis. Promotes the proliferation of neural progenitors and inhibits neuronal differentiation during cortical development. Regulates neurogenesis via the modulation of RASSF10; regulates RASSF10 expression by promoting SETD1A-mediated H3K4 methylation at the RASSF10 promoter. The sequence is that of Nucleosome assembly protein 1-like 1 (Nap1l1) from Rattus norvegicus (Rat).